The sequence spans 343 residues: Calcium/calmodulin-dependent protein kinase type 1B (343 aa).

In terms of domain architecture, Protein kinase spans tyrosine 15–isoleucine 270. Residues leucine 21 to valine 29 and lysine 44 each bind ATP. Aspartate 136 serves as the catalytic Proton acceptor. The tract at residues lysine 290–arginine 311 is calmodulin-binding. Residues glycine 314–tryptophan 343 are disordered. Position 338 is a phosphoserine (serine 338).

The protein belongs to the protein kinase superfamily. CAMK Ser/Thr protein kinase family. CaMK subfamily. Expressed at highest levels in adult brain, and expressed in embryo. In the adult brain detected at high levels in the anterior olfactory nuclei, piriform cortex, septal nuclei, bed nuclei of the stria terminalis, hippocampal pyramidal cells, dentate granule cells, amygdala, hypothalamic nuclei, parabrachial nucleus, and nucleus of the solitary tract. Expressed at lower levels in adult ovary and heart and at very low levels in testis, lung and muscle.

The protein localises to the cytoplasm. It localises to the nucleus. The enzyme catalyses L-seryl-[protein] + ATP = O-phospho-L-seryl-[protein] + ADP + H(+). It carries out the reaction L-threonyl-[protein] + ATP = O-phospho-L-threonyl-[protein] + ADP + H(+). Activated by Ca(2+)/calmodulin. In terms of biological role, calcium/calmodulin-dependent protein kinase belonging to a proposed calcium-triggered signaling cascade. In vitro phosphorylates CREB1 and SYN1/synapsin I. Phosphorylates and activates CAMK1. In Mus musculus (Mouse), this protein is Calcium/calmodulin-dependent protein kinase type 1B (Pnck).